Reading from the N-terminus, the 947-residue chain is Valine--tRNA ligase (947 aa).

A 'HIGH' region motif is present at residues 45 to 55 (PNVTGSLHMGH). Positions 591 to 595 (KMSKS) match the 'KMSKS' region motif. Lysine 594 provides a ligand contact to ATP. Residues 879-943 (DLAAEQARLE…ASLRTALTRV (65 aa)) adopt a coiled-coil conformation.

This sequence belongs to the class-I aminoacyl-tRNA synthetase family. ValS type 1 subfamily. Monomer.

It localises to the cytoplasm. The enzyme catalyses tRNA(Val) + L-valine + ATP = L-valyl-tRNA(Val) + AMP + diphosphate. Its function is as follows. Catalyzes the attachment of valine to tRNA(Val). As ValRS can inadvertently accommodate and process structurally similar amino acids such as threonine, to avoid such errors, it has a 'posttransfer' editing activity that hydrolyzes mischarged Thr-tRNA(Val) in a tRNA-dependent manner. The chain is Valine--tRNA ligase from Agrobacterium fabrum (strain C58 / ATCC 33970) (Agrobacterium tumefaciens (strain C58)).